The following is a 129-amino-acid chain: Glycine cleavage system H protein (129 aa).

The Lipoyl-binding domain maps to 24-106; the sequence is TYTVGITEHA…YAGGWIFKIK (83 aa). Residue lysine 65 is modified to N6-lipoyllysine.

This sequence belongs to the GcvH family. As to quaternary structure, the glycine cleavage system is composed of four proteins: P, T, L and H. The cofactor is (R)-lipoate.

Its function is as follows. The glycine cleavage system catalyzes the degradation of glycine. The H protein shuttles the methylamine group of glycine from the P protein to the T protein. In Escherichia coli O45:K1 (strain S88 / ExPEC), this protein is Glycine cleavage system H protein.